A 433-amino-acid chain; its full sequence is MDNNYNDNVNGWAEMEPSQPMGGLRLPTQNMDPPEQNNESQLSELPRMKIDNDYASPIERQSVITSGTNNYEPKVETVTSFFHTGIDYSNFGMLDQTTMQPFYPLYSGIPVNTLGTFSGYTNSIYDKPSLYDPSIPTINIPSTYPTVAPTYECVKCSQSCGAGMKAVNGGMMCVNCSTPKTTYSPPVAYSTSLGQPPILEIPSEQPTAKIAKQSSKKSSSSNRGSNGSASRRQGLVCSNCNGTNTTLWRRNAEGDPVCNACGLYFKLHHIPRPTSMKKEGALQTRKRKSKSGDSSTPSTSRARERKFERASSSTEKAQRSSNRRAGSAKADRELSTAAVAAATATYVSHADLYPVSSAAVTLPDQTYSNYYQWNTAATAGLMMVPNDQNYVYAATNYQTGLRPADNIQVHVMPVQDDETKAAARDLEAVDGDS.

Disordered regions lie at residues 1–47 and 194–235; these read MDNN…ELPR and GQPP…RQGL. Positions 27 to 43 are enriched in polar residues; the sequence is PTQNMDPPEQNNESQLS. The segment covering 211–234 has biased composition (low complexity); it reads AKQSSKKSSSSNRGSNGSASRRQG. The segment at 237–261 adopts a GATA-type zinc-finger fold; it reads CSNCNGTNTTLWRRNAEGDPVCNAC. The disordered stretch occupies residues 275–332; it reads SMKKEGALQTRKRKSKSGDSSTPSTSRARERKFERASSSTEKAQRSSNRRAGSAKADR. Positions 310 to 324 are enriched in polar residues; it reads ASSSTEKAQRSSNRR.

Interacts with lag-1. Interacts with pha-4. Interacts with rpt-6. In terms of processing, may be ubiquitinated in response to infection by B.pseudomallei. Expressed in the intestine.

The protein localises to the nucleus. Transcriptional activator that binds to the consensus sequence 5'-[AT]GATA[AG]-3'. Predominantly directs the transcription of intestinal genes such as ges-1, cpr-6, pho-1, ftn-1, vit-2 and lev-11, and itself. Required for gut-specific differentiation, specifically acting with the GATA region-binding transcription factor elt-7 to control normal gene expression and promote normal formation of the intestine. Regulates intestinal gene expression in response to hypoxia to promote longevity. Modulation of longevity may, in part, be the result of regulation of expression of daf-16 isoforms d and f in the intestine. Regulates tissue specific gene expression at basal levels and in response to bacterial infection in the intestine to control innate immunity. Plays a role in the induction of metal-responsive genes, activating gene expression from zinc-activated promoters and iron-dependent promoters and enhancers. May regulate the expression of genes that control sensitivity to oxidative stress, in a mab-3-dependent manner, and osmotic stress, in conjunction with the GATA region-binding transcription factor elt-3. May play a role in sphingolipid signaling by regulating the expression of the sphingosine-1-phosphate degrading enzyme, sphingosine-1-phosphate lyase. May act with the Notch signaling pathway to promote endodermal gene expression. Has a protective role in response to infection by Gram-negative bacteria such as S.enterica, E.coli, P.aeruginosa and B.pseudomallei, Gram-positive bacterium E.faecalis and fungal pathogen C.neoformans. An association with the 26S proteasome regulatory subunit rpt-6, in part, controls gene expression in response to infection by P.aeruginosa. Regulates gene expression during the recovery phase following a bacterial infection. May act with p38-activated transcription factors to control p38 gene induction in response to bacterial infection. Controls lysosome formation in the intestine by controlling lysosomal gene expression. The chain is Transcription factor elt-2 from Caenorhabditis elegans.